We begin with the raw amino-acid sequence, 163 residues long: Nucleotide-binding protein PM1656 (163 aa).

This sequence belongs to the YajQ family.

In terms of biological role, nucleotide-binding protein. The protein is Nucleotide-binding protein PM1656 of Pasteurella multocida (strain Pm70).